A 192-amino-acid polypeptide reads, in one-letter code: ATP-dependent Clp protease proteolytic subunit 1 (192 aa).

Catalysis depends on Ser-92, which acts as the Nucleophile. Residue His-117 is part of the active site.

Belongs to the peptidase S14 family. Fourteen ClpP subunits assemble into 2 heptameric rings which stack back to back to give a disk-like structure with a central cavity, resembling the structure of eukaryotic proteasomes.

The protein resides in the cytoplasm. It catalyses the reaction Hydrolysis of proteins to small peptides in the presence of ATP and magnesium. alpha-casein is the usual test substrate. In the absence of ATP, only oligopeptides shorter than five residues are hydrolyzed (such as succinyl-Leu-Tyr-|-NHMec, and Leu-Tyr-Leu-|-Tyr-Trp, in which cleavage of the -Tyr-|-Leu- and -Tyr-|-Trp bonds also occurs).. Functionally, cleaves peptides in various proteins in a process that requires ATP hydrolysis. Has a chymotrypsin-like activity. Plays a major role in the degradation of misfolded proteins. The sequence is that of ATP-dependent Clp protease proteolytic subunit 1 from Chlamydia abortus (strain DSM 27085 / S26/3) (Chlamydophila abortus).